Reading from the N-terminus, the 456-residue chain is E3 ubiquitin-protein ligase RNF25 (456 aa).

The region spanning 18 to 127 (SEVEVLESIY…EKGKEILTDN (110 aa)) is the RWD domain. 8 residues coordinate Zn(2+): Cys134, Cys137, Cys152, His154, His157, Cys160, Cys195, and Cys198. The segment at 134–199 (CVICLYGFQE…AVGVQCPVCR (66 aa)) adopts an RING-type zinc-finger fold. A disordered region spans residues 269 to 456 (LEPESAVDVS…PLGLESEEGS (188 aa)). A compositionally biased stretch (polar residues) spans 288–332 (SAEQSTSLADQSTLPTSLPMTTQYTYEKTSGAGPNQQRPGETQKS). 2 stretches are compositionally biased toward basic and acidic residues: residues 364 to 388 (SEIH…EPRN) and 410 to 421 (RTRDCARWERSK).

Belongs to the RNF25 family. Interacts with UBE2D2, and may also interact with UBE2E1 and UBE2E3. Interacts with RELA/p65. Ubiquitinated; autoubiquitinated. In terms of tissue distribution, ubiquitous.

It localises to the cytoplasm. It catalyses the reaction S-ubiquitinyl-[E2 ubiquitin-conjugating enzyme]-L-cysteine + [acceptor protein]-L-lysine = [E2 ubiquitin-conjugating enzyme]-L-cysteine + N(6)-ubiquitinyl-[acceptor protein]-L-lysine.. The protein operates within protein modification; protein ubiquitination. Functionally, E3 ubiquitin-protein ligase that plays a key role in the RNF14-RNF25 translation quality control pathway, a pathway that takes place when a ribosome has stalled during translation, and which promotes ubiquitination and degradation of translation factors on stalled ribosomes. Catalyzes ubiquitination of RPS27A in response to ribosome collisions, promoting activation of RNF14. RNF25 catalyzes ubiquitination of other ribosomal proteins on stalled ribosomes, such as RPL0, RPL1, RPL12, RPS13 and RPS17. Also involved in ubiquitination and degradation of stalled ETF1/eRF1. Independently of its function in the response to stalled ribosomes, mediates ubiquitination and subsequent proteasomal degradation of NKD2. May also stimulate transcription mediated by NF-kappa-B via its interaction with RELA/p65. The protein is E3 ubiquitin-protein ligase RNF25 of Mus musculus (Mouse).